We begin with the raw amino-acid sequence, 508 residues long: Maturase K (508 aa).

It belongs to the intron maturase 2 family. MatK subfamily.

The protein localises to the plastid. The protein resides in the chloroplast. Its function is as follows. Usually encoded in the trnK tRNA gene intron. Probably assists in splicing its own and other chloroplast group II introns. This Cunninghamia lanceolata (China fir) protein is Maturase K.